The primary structure comprises 145 residues: 3-dehydroquinate dehydratase (145 aa).

The Proton acceptor role is filled by Tyr23. Asn74, His80, and Asp87 together coordinate substrate. His100 (proton donor) is an active-site residue. Substrate is bound by residues 101–102 (IS) and Arg111.

Belongs to the type-II 3-dehydroquinase family. As to quaternary structure, homododecamer.

The catalysed reaction is 3-dehydroquinate = 3-dehydroshikimate + H2O. The protein operates within metabolic intermediate biosynthesis; chorismate biosynthesis; chorismate from D-erythrose 4-phosphate and phosphoenolpyruvate: step 3/7. Its function is as follows. Catalyzes a trans-dehydration via an enolate intermediate. This chain is 3-dehydroquinate dehydratase, found in Dictyoglomus turgidum (strain DSM 6724 / Z-1310).